The sequence spans 346 residues: Dihydroorotase (346 aa).

Zn(2+) contacts are provided by histidine 14 and histidine 16. Residues 16-18 (HLR) and asparagine 42 each bind substrate. Zn(2+) contacts are provided by lysine 100, histidine 137, and histidine 175. Lysine 100 carries the N6-carboxylysine modification. Histidine 137 provides a ligand contact to substrate. Substrate is bound at residue leucine 220. Aspartate 248 lines the Zn(2+) pocket. Aspartate 248 is a catalytic residue. The substrate site is built by histidine 252 and alanine 264.

This sequence belongs to the metallo-dependent hydrolases superfamily. DHOase family. Class II DHOase subfamily. In terms of assembly, homodimer. The cofactor is Zn(2+).

The enzyme catalyses (S)-dihydroorotate + H2O = N-carbamoyl-L-aspartate + H(+). It functions in the pathway pyrimidine metabolism; UMP biosynthesis via de novo pathway; (S)-dihydroorotate from bicarbonate: step 3/3. Functionally, catalyzes the reversible cyclization of carbamoyl aspartate to dihydroorotate. This chain is Dihydroorotase, found in Cereibacter sphaeroides (strain ATCC 17025 / ATH 2.4.3) (Rhodobacter sphaeroides).